Here is a 274-residue protein sequence, read N- to C-terminus: 2-dehydro-3-deoxyphosphooctonate aldolase (274 aa).

Belongs to the KdsA family.

It localises to the cytoplasm. It catalyses the reaction D-arabinose 5-phosphate + phosphoenolpyruvate + H2O = 3-deoxy-alpha-D-manno-2-octulosonate-8-phosphate + phosphate. The protein operates within carbohydrate biosynthesis; 3-deoxy-D-manno-octulosonate biosynthesis; 3-deoxy-D-manno-octulosonate from D-ribulose 5-phosphate: step 2/3. It functions in the pathway bacterial outer membrane biogenesis; lipopolysaccharide biosynthesis. This is 2-dehydro-3-deoxyphosphooctonate aldolase from Rickettsia peacockii (strain Rustic).